We begin with the raw amino-acid sequence, 92 residues long: Alpha-conotoxin FrXXA (92 aa).

An N-terminal signal peptide occupies residues Met-1–Gly-24. Residues Gln-25–Arg-45 constitute a propeptide that is removed on maturation. 4 cysteine pairs are disulfide-bonded: Cys-63-Cys-72, Cys-68-Cys-80, Cys-73-Cys-90, and Cys-78-Cys-92.

Belongs to the conotoxin D superfamily. As to quaternary structure, homodimer; disulfide-linked. In terms of processing, the homodimer contains 10 disulfide bonds. Expressed by the venom duct.

It is found in the secreted. Functionally, alpha-conotoxins act on postsynaptic membranes, they bind to the nicotinic acetylcholine receptors (nAChR) and thus inhibit them. Through its two C-terminal domains, this homodimeric protein would bind to two nAChR allosteric sites, located outside the nAChR C-loop of the principal binding face and at the adjacent binding interface in a clockwise direction. This toxin blocks both neuronal and muscular subtypes: human alpha-7/CHRNA7, human alpha-3-beta-2 (CHRNA3-CHRNB2), human alpha-4-beta-2 (CHRNA4-CHRNB2), mouse adult muscular subtype alpha-1-beta-1-delta-epsilon (CHRNA1-CHRNB1-CHRND-CHRNE), and mouse fetal muscular subtype alpha-1-beta-1-gamma-delta (CHRNA1-CHRNB1-CHRNG-CHRND). Shows different dissociation rates towards the different subtypes, with a very slow rate towards alpha-7 subtype (almost irreversible), followed by the adult muscular subtype, the fetal muscular subtype, alpha-3-beta-2 and alpha-4-beta-2 (almost entirely reversible within a few minutes of washing). The chain is Alpha-conotoxin FrXXA from Conus fergusoni (Ferguson's cone).